We begin with the raw amino-acid sequence, 326 residues long: MFDGRSDIYDSTSFAAELDDLYSCRSTGRENGRRSRVSTRGVHRDRCGSAAKRRSTKRRCELVARERDRYSLYLDYMASHPSDEISAVRELVVPLIKTTSITLPFDLNQTVADNCLSLSGMGYYLGIGGCCPTCTVSGEPRLHRADRAALILAYVQQLNNIYEYRGFLASVLAAAAQGDQAGVAASEGVQAERLLENVLAQPELFFAYHVLRDGGIQNVRVLFYRDLSVSGYMMYAVFPTKSVHLHYRLIDRLLAACPGYKIIAHVWQTAFVLVVRRDEGQQTDMDIPTVSAGDIYCKMCDLSFDGELLLEYKKLYAVFDDFLPPV.

The CCCH-type zinc finger occupies 115 to 244; it reads CLSLSGMGYY…YAVFPTKSVH (130 aa).

This sequence belongs to the herpesviridae NEC1 protein family. Forms a heterohexameric complex with NEC2. Interacts with capsid vertex specific component 2/CVC2; this interaction directs the capsid to the host inner nuclear membrane to initiate budding. In terms of processing, phosphorylated at serine residues in the N-terminus. This phosphorylation regulates the localization within the inner nuclear membrane.

It is found in the host nucleus inner membrane. Plays an essential role in virion nuclear egress, the first step of virion release from infected cell. Within the host nucleus, NEC1 interacts with the newly formed capsid through the vertexes and directs it to the inner nuclear membrane by associating with NEC2. Induces the budding of the capsid at the inner nuclear membrane as well as its envelopment into the perinuclear space. There, the NEC1/NEC2 complex promotes the fusion of the enveloped capsid with the outer nuclear membrane and the subsequent release of the viral capsid into the cytoplasm where it will reach the secondary budding sites in the host Golgi or trans-Golgi network. In Equine herpesvirus 1 (strain Ab4p) (EHV-1), this protein is Nuclear egress protein 1.